The sequence spans 83 residues: Subtilisin-chymotrypsin inhibitor CI-1A (83 aa).

The segment at 1–24 (MSSMEGSVLKYPEPTEGSIGASSA) is disordered.

It belongs to the protease inhibitor I13 (potato type I serine protease inhibitor) family.

Functionally, inhibits both subtilisin and chymotrypsin. The polypeptide is Subtilisin-chymotrypsin inhibitor CI-1A (Hordeum vulgare (Barley)).